Reading from the N-terminus, the 373-residue chain is MSDNSKTRVVVGMSGGVDSSVTALLLKEQGYDVIGIFMKNWDDTDENGVCTATEDYKDVVAVADQIGIPYYSVNFEKEYWDRVFEYFLAEYRAGRTPNPDVMCNKEIKFKAFLDYAMTLGADYVATGHYARVVRDEDGTVHMLRGVDNGKDQTYFLSQLSQEQLQKTMFPLGHLEKPEVRKLAEEAGLSTAKKKDSTGICFIGEKNFKNFLSNYLPAQPGRMMTVDGRDMGEHAGLMYYTIGQRGGLGIGGQHGGDNAPWFVVGKDLSKNILYVGQGFYHDSLMSTSLEASQVHFTRDMPEEFTLECTAKFRYRQPDSKVTVHVKGDKAEVIFAEPQRAITPGQAVVFYDGEECLGGGLIDNAYRDGQVCQYI.

Residues 12-19 and M38 contribute to the ATP site; that span reads GMSGGVDS. Residues 98 to 100 are interaction with target base in tRNA; the sequence is NPD. C103 (nucleophile) is an active-site residue. The cysteines at positions 103 and 200 are disulfide-linked. G127 provides a ligand contact to ATP. An interaction with tRNA region spans residues 150-152; sequence KDQ. C200 acts as the Cysteine persulfide intermediate in catalysis. An interaction with tRNA region spans residues 312–313; the sequence is RY.

The protein belongs to the MnmA/TRMU family.

It localises to the cytoplasm. The enzyme catalyses S-sulfanyl-L-cysteinyl-[protein] + uridine(34) in tRNA + AH2 + ATP = 2-thiouridine(34) in tRNA + L-cysteinyl-[protein] + A + AMP + diphosphate + H(+). Catalyzes the 2-thiolation of uridine at the wobble position (U34) of tRNA, leading to the formation of s(2)U34. The sequence is that of tRNA-specific 2-thiouridylase MnmA from Streptococcus pneumoniae (strain 70585).